Consider the following 449-residue polypeptide: N-succinylarginine dihydrolase (449 aa).

Residues 19–28 (GGLSYGNVAS), Asn-110, and 137–138 (HR) contribute to the substrate site. The interval 23 to 43 (YGNVASQSNSQQGSNPREAAR) is disordered. Polar residues predominate over residues 25–37 (NVASQSNSQQGSN). The active site involves Glu-174. Position 214 (Arg-214) interacts with substrate. His-250 is an active-site residue. 2 residues coordinate substrate: Asp-252 and Asn-365. The active-site Nucleophile is the Cys-371.

It belongs to the succinylarginine dihydrolase family. In terms of assembly, homodimer.

It carries out the reaction N(2)-succinyl-L-arginine + 2 H2O + 2 H(+) = N(2)-succinyl-L-ornithine + 2 NH4(+) + CO2. It participates in amino-acid degradation; L-arginine degradation via AST pathway; L-glutamate and succinate from L-arginine: step 2/5. Catalyzes the hydrolysis of N(2)-succinylarginine into N(2)-succinylornithine, ammonia and CO(2). The protein is N-succinylarginine dihydrolase of Pseudomonas putida (strain GB-1).